The sequence spans 476 residues: MLLSDLSSDQEATGSNSHGGGGGGDRMVVGSHGAAHVVLSNLFLPPAAAAAATMLLPAAPVMVRPAAMAAAQEPRAKKKRSLPGNPDPEAEVIALSPRALVATNRFVCEVCNKGFQRDQNLQLHRRGHNLPWKLRHRAAAVSAVTTAAPAPRKRVYVCPEPTCVHHDPARALGDLTGIKKHFSRKHGEKRWRCERCGKRYAVHSDWKAHVKNCGTREYRCDCGILFSRKDSLLTHRAFCDALAEESARLLAAANNSSSITTTTCNNSNISSNNNNNNINSISNSNNLLITSSSSSPPLFLPFSTTPAENPNPNQLLFLQQHQAAHHQLLLPQFQQPPSSPPAYFDHLAFGGGGGVITSSSCNDDNSSIAGDVMVAAGGDSVSFGLTSEGSVTMHAGDVGRRRLTRDFLGVDHDAGEVDELELDELPADLSTTAAACQGCNFAAATTVACCATDFTTGSRQYLGRLPPVNETWSHNF.

Positions 1–13 are enriched in polar residues; the sequence is MLLSDLSSDQEAT. The segment at 1–27 is disordered; sequence MLLSDLSSDQEATGSNSHGGGGGGDRM. 2 consecutive C2H2-type zinc fingers follow at residues 106 to 128 and 156 to 186; these read FVCE…RRGH and YVCP…SRKH. Short sequence motifs (nuclear localization signal) lie at residues 124-131 and 178-185; these read HRRGHNLP and IKKHFSRK. The C2H2-type 2; degenerate zinc finger occupies 191 to 214; it reads WRCERCGKRYAVHSDWKAHVKNCG. Residues Cys193, Cys196, His209, Cys213, Cys220, Cys222, His235, and Cys239 each coordinate Zn(2+). The CCHC-type 2; atypical zinc finger occupies 218 to 241; that stretch reads YRCDCGILFSRKDSLLTHRAFCDA. Residues 228–240 form an SHR-binding region; it reads RKDSLLTHRAFCD.

Its subcellular location is the nucleus. Functionally, transcription activator that acts as a flowering master switch in both long and short days, independently of the circadian clock. Promotes flowering upstream of HD1 by up-regulating FTL1, FTL4, FTL5, FTL6, EHD1, HD3A and RFT1. Seems to repress FTL11 expression. May recognize the consensus motif 5'-TTTGTCGTAAT-3' in target gene promoters. The protein is Protein EARLY HEADING DATE 2 of Oryza sativa subsp. indica (Rice).